Consider the following 21-residue polypeptide: Hemolymph 65 kDa lectin BG04 (21 aa).

In terms of tissue distribution, hemolymph.

It is found in the secreted. Its function is as follows. Binds and precipitates antigens of the parasite Echinostoma paraensei. The sequence is that of Hemolymph 65 kDa lectin BG04 (BG04) from Biomphalaria glabrata (Bloodfluke planorb).